The following is a 352-amino-acid chain: Protein RecA (352 aa).

66-73 (GPESSGKT) serves as a coordination point for ATP.

The protein belongs to the RecA family.

It localises to the cytoplasm. Its function is as follows. Can catalyze the hydrolysis of ATP in the presence of single-stranded DNA, the ATP-dependent uptake of single-stranded DNA by duplex DNA, and the ATP-dependent hybridization of homologous single-stranded DNAs. It interacts with LexA causing its activation and leading to its autocatalytic cleavage. The polypeptide is Protein RecA (Psychrobacter arcticus (strain DSM 17307 / VKM B-2377 / 273-4)).